Here is a 400-residue protein sequence, read N- to C-terminus: CCA-adding enzyme (400 aa).

Glycine 28 and arginine 31 together coordinate ATP. Positions 28 and 31 each coordinate CTP. 2 residues coordinate Mg(2+): aspartate 41 and aspartate 43. The ATP site is built by arginine 112, aspartate 155, arginine 158, arginine 161, and arginine 164. Residues arginine 112, aspartate 155, arginine 158, arginine 161, and arginine 164 each coordinate CTP.

This sequence belongs to the tRNA nucleotidyltransferase/poly(A) polymerase family. Bacterial CCA-adding enzyme type 3 subfamily. Homodimer. Mg(2+) is required as a cofactor.

It catalyses the reaction a tRNA precursor + 2 CTP + ATP = a tRNA with a 3' CCA end + 3 diphosphate. It carries out the reaction a tRNA with a 3' CCA end + 2 CTP + ATP = a tRNA with a 3' CCACCA end + 3 diphosphate. Catalyzes the addition and repair of the essential 3'-terminal CCA sequence in tRNAs without using a nucleic acid template. Adds these three nucleotides in the order of C, C, and A to the tRNA nucleotide-73, using CTP and ATP as substrates and producing inorganic pyrophosphate. tRNA 3'-terminal CCA addition is required both for tRNA processing and repair. Also involved in tRNA surveillance by mediating tandem CCA addition to generate a CCACCA at the 3' terminus of unstable tRNAs. While stable tRNAs receive only 3'-terminal CCA, unstable tRNAs are marked with CCACCA and rapidly degraded. The sequence is that of CCA-adding enzyme from Staphylococcus aureus (strain COL).